Consider the following 343-residue polypeptide: Tryptophan--tRNA ligase (343 aa).

Residues 15–17 (QPT) and 24–25 (GN) each bind ATP. The short motif at 16-25 (PTSDSLHLGN) is the 'HIGH' region element. Aspartate 145 contributes to the L-tryptophan binding site. Residues 157–159 (GED), isoleucine 196, and 205–209 (KMSKS) contribute to the ATP site. The short motif at 205-209 (KMSKS) is the 'KMSKS' region element.

It belongs to the class-I aminoacyl-tRNA synthetase family. In terms of assembly, homodimer.

It localises to the cytoplasm. The catalysed reaction is tRNA(Trp) + L-tryptophan + ATP = L-tryptophyl-tRNA(Trp) + AMP + diphosphate + H(+). Catalyzes the attachment of tryptophan to tRNA(Trp). This Mycobacterium leprae (strain TN) protein is Tryptophan--tRNA ligase.